A 422-amino-acid polypeptide reads, in one-letter code: UDP-N-acetylmuramoylalanine--D-glutamate ligase (422 aa).

102-108 serves as a coordination point for ATP; sequence GTNGKTT.

This sequence belongs to the MurCDEF family.

The protein resides in the cytoplasm. It carries out the reaction UDP-N-acetyl-alpha-D-muramoyl-L-alanine + D-glutamate + ATP = UDP-N-acetyl-alpha-D-muramoyl-L-alanyl-D-glutamate + ADP + phosphate + H(+). It participates in cell wall biogenesis; peptidoglycan biosynthesis. Functionally, cell wall formation. Catalyzes the addition of glutamate to the nucleotide precursor UDP-N-acetylmuramoyl-L-alanine (UMA). The sequence is that of UDP-N-acetylmuramoylalanine--D-glutamate ligase from Helicobacter pylori (strain ATCC 700392 / 26695) (Campylobacter pylori).